Consider the following 101-residue polypeptide: DNA-binding protein Fis (101 aa).

Residues 77-96 (QTRAANMLGINRGTLRKKLK) constitute a DNA-binding region (H-T-H motif).

The protein belongs to the transcriptional regulatory Fis family. Homodimer.

In terms of biological role, activates ribosomal RNA transcription. Plays a direct role in upstream activation of rRNA promoters. This chain is DNA-binding protein Fis, found in Shewanella pealeana (strain ATCC 700345 / ANG-SQ1).